Reading from the N-terminus, the 467-residue chain is Signal transduction histidine-protein kinase BaeS (467 aa).

Over 1–11 the chain is Cytoplasmic; sequence MKFWRPGITGK. Residues 12–32 form a helical membrane-spanning segment; sequence LFLAIFATCIVLLISMHWAVR. Residues 33–167 are Periplasmic-facing; the sequence is ISFERGFIDY…NFDKQQRQTS (135 aa). A helical transmembrane segment spans residues 168-186; the sequence is WLIVALATLLAALATFLLA. One can recognise an HAMP domain in the interval 187-239; it reads RGLLAPVKRLVDGTHKLAAGDFTTRVTPTSEDELGKLAQDFNQLASTLEKNQQ. Residues 187-467 lie on the Cytoplasmic side of the membrane; the sequence is RGLLAPVKRL…PLERDLQREV (281 aa). Residues 247-461 form the Histidine kinase domain; it reads DISHELRTPL…SITVELPLER (215 aa). The residue at position 250 (H250) is a Phosphohistidine; by autocatalysis.

Autophosphorylated.

The protein resides in the cell inner membrane. It carries out the reaction ATP + protein L-histidine = ADP + protein N-phospho-L-histidine.. Functionally, member of the two-component regulatory system BaeS/BaeR which responds to envelope stress. Activates expression of periplasmic chaperone spy in response to spheroplast formation, indole and P pili protein PapG overexpression. Activates BaeR by phosphorylation which then activates the mdtABCD and probably the CRISPR-Cas casABCDE-ygbT-ygbF operons. The chain is Signal transduction histidine-protein kinase BaeS from Escherichia coli (strain K12).